Consider the following 179-residue polypeptide: uncharacterized protein (179 aa).

This is an uncharacterized protein from Pasteurella multocida (strain Pm70).